A 118-amino-acid polypeptide reads, in one-letter code: MSEFAPICIYLVISLLVSLIPLGVPFPFASNSSTYPDKLSAYECGFDPSGDARSRFDIRFYLVSILFIIPDPEVTFSFPWAVPPNKIDPFGSWSMMAFLLILTIGSLYEWKRGASDRE.

2 helical membrane passes run 4–24 (FAPICIYLVISLLVSLIPLGV) and 87–107 (IDPFGSWSMMAFLLILTIGSL).

It belongs to the complex I subunit 3 family.

The protein localises to the mitochondrion membrane. It catalyses the reaction a ubiquinone + NADH + 5 H(+)(in) = a ubiquinol + NAD(+) + 4 H(+)(out). Its function is as follows. Core subunit of the mitochondrial membrane respiratory chain NADH dehydrogenase (Complex I) that is believed to belong to the minimal assembly required for catalysis. Complex I functions in the transfer of electrons from NADH to the respiratory chain. The immediate electron acceptor for the enzyme is believed to be ubiquinone. This chain is NADH-ubiquinone oxidoreductase chain 3 (ND3), found in Panax ginseng (Korean ginseng).